A 279-amino-acid chain; its full sequence is Shikimate dehydrogenase (NADP(+)) (279 aa).

Shikimate contacts are provided by residues 17-19 (SQS) and Thr64. Lys68 (proton acceptor) is an active-site residue. Shikimate contacts are provided by Asn89 and Asp105. NADP(+)-binding positions include 130–134 (GAGGA) and Leu218. Tyr220 serves as a coordination point for shikimate. Residue Gly242 participates in NADP(+) binding.

This sequence belongs to the shikimate dehydrogenase family. Homodimer.

It carries out the reaction shikimate + NADP(+) = 3-dehydroshikimate + NADPH + H(+). Its pathway is metabolic intermediate biosynthesis; chorismate biosynthesis; chorismate from D-erythrose 4-phosphate and phosphoenolpyruvate: step 4/7. In terms of biological role, involved in the biosynthesis of the chorismate, which leads to the biosynthesis of aromatic amino acids. Catalyzes the reversible NADPH linked reduction of 3-dehydroshikimate (DHSA) to yield shikimate (SA). The protein is Shikimate dehydrogenase (NADP(+)) of Methylococcus capsulatus (strain ATCC 33009 / NCIMB 11132 / Bath).